The chain runs to 86 residues: Small ribosomal subunit protein bS20 (86 aa).

The protein belongs to the bacterial ribosomal protein bS20 family.

Binds directly to 16S ribosomal RNA. The polypeptide is Small ribosomal subunit protein bS20 (Pseudarthrobacter chlorophenolicus (strain ATCC 700700 / DSM 12829 / CIP 107037 / JCM 12360 / KCTC 9906 / NCIMB 13794 / A6) (Arthrobacter chlorophenolicus)).